Here is a 308-residue protein sequence, read N- to C-terminus: UPF0282 protein SSO3251 (308 aa).

It belongs to the UPF0282 family.

The sequence is that of UPF0282 protein SSO3251 from Saccharolobus solfataricus (strain ATCC 35092 / DSM 1617 / JCM 11322 / P2) (Sulfolobus solfataricus).